Consider the following 88-residue polypeptide: Phosphocarrier protein HPr (88 aa).

One can recognise an HPr domain in the interval Met1–Glu88. The active-site Pros-phosphohistidine intermediate is the His15. Position 46 is a phosphoserine; by HPrK/P (Ser46).

The protein belongs to the HPr family.

It localises to the cytoplasm. Phosphorylation on Ser-46 inhibits the phosphoryl transfer from enzyme I to HPr. Functionally, general (non sugar-specific) component of the phosphoenolpyruvate-dependent sugar phosphotransferase system (sugar PTS). This major carbohydrate active-transport system catalyzes the phosphorylation of incoming sugar substrates concomitantly with their translocation across the cell membrane. The phosphoryl group from phosphoenolpyruvate (PEP) is transferred to the phosphoryl carrier protein HPr by enzyme I. Phospho-HPr then transfers it to the PTS EIIA domain. In Treponema pallidum (strain Nichols), this protein is Phosphocarrier protein HPr (ptsH).